A 182-amino-acid polypeptide reads, in one-letter code: Bifunctional dihydrofolate reductase-thymidylate synthase (182 aa).

Positions 1–182 (AICACCKVLN…YFTRINNAYT (182 aa)) constitute a DHFR domain. Position 25–31 (25–31 (GLGNAGG)) interacts with NADP(+). Asp40 provides a ligand contact to substrate. Residues 93 to 95 (KTS) and 114 to 117 (LSRT) each bind NADP(+). Residues Ile154, Tyr160, and Thr175 each contribute to the substrate site. 155 to 162 (GGASVYKE) provides a ligand contact to NADP(+).

It in the N-terminal section; belongs to the dihydrofolate reductase family. In the C-terminal section; belongs to the thymidylate synthase family. As to quaternary structure, homodimer.

It catalyses the reaction (6S)-5,6,7,8-tetrahydrofolate + NADP(+) = 7,8-dihydrofolate + NADPH + H(+). The catalysed reaction is dUMP + (6R)-5,10-methylene-5,6,7,8-tetrahydrofolate = 7,8-dihydrofolate + dTMP. It functions in the pathway cofactor biosynthesis; tetrahydrofolate biosynthesis; 5,6,7,8-tetrahydrofolate from 7,8-dihydrofolate: step 1/1. Bifunctional enzyme. Involved in de novo dTMP biosynthesis. Key enzyme in folate metabolism. Catalyzes an essential reaction for de novo glycine and purine synthesis, DNA precursor synthesis, and for the conversion of dUMP to dTMP. The sequence is that of Bifunctional dihydrofolate reductase-thymidylate synthase from Plasmodium vinckei.